A 477-amino-acid polypeptide reads, in one-letter code: MHQLIRKFVFTESHCLEEEDNTKSFAELFEKLDVNKDGKVDVSELKTGLAAMGFSMGKGEAQKIVTSGDTDKDEGLDFEEFSKYLKEHEKKLRLTFKSLDKNEDGRVDAKEIQQSLKDLGINLSDKDAEKILHSIDVDGTMTLDWNEWREHFLFNPAEDLQQIIRYWKKSTVLDIGDSLTIPDEFTEEEKTTGMWWKQLAAGGVAGAVSRTGTAPLDRMKVFMQVHSSKTNKISLVNGFKQMIKEGGVASLWRGNGVNVIKIAPETAIKFMAYEQYKKLLSKDGGKVQSHERFMAGSLAGATAQTAIYPMEVMKTRLTLRKTGQYSGMFDCAKKILRKEGVKAFYKGYVPNILGIIPYAGIDLAVYETLKNTWLSHYAKDTANPGVLVLLGCGTISSTCGQLASYPLALIRTRMQAMASMEGSEQVSMSKLVKKIMQKEGFFGLYRGILPNFMKVIPAVSISYVVYEYMRSGLGISK.

The regulatory N-terminal domain stretch occupies residues 1–174 (MHQLIRKFVF…RYWKKSTVLD (174 aa)). Over 1-198 (MHQLIRKFVF…EKTTGMWWKQ (198 aa)) the chain is Mitochondrial intermembrane. Positions 20-55 (DNTKSFAELFEKLDVNKDGKVDVSELKTGLAAMGFS) constitute an EF-hand 1 domain. Ca(2+) contacts are provided by D33, N35, D37, K39, E44, D69, D71, D73, E80, D100, N102, D104, R106, E111, D136, D138, T140, T142, and E147. EF-hand domains are found at residues 87–122 (EHEK…LGIN) and 123–158 (LSDK…NPAE). Residues 160–169 (LQQIIRYWKK) form a linker region region. The segment at 175 to 477 (IGDSLTIPDE…YMRSGLGISK (303 aa)) is C-terminal transmembrane transporter domain. Solcar repeat units lie at residues 193-279 (GMWW…YKKL), 287-372 (VQSH…LKNT), and 384-472 (PGVL…MRSG). A helical membrane pass occupies residues 199–216 (LAAGGVAGAVSRTGTAPL). The Mitochondrial matrix portion of the chain corresponds to 217–253 (DRMKVFMQVHSSKTNKISLVNGFKQMIKEGGVASLWR). Residues 254–273 (GNGVNVIKIAPETAIKFMAY) traverse the membrane as a helical segment. At 274-296 (EQYKKLLSKDGGKVQSHERFMAG) the chain is on the mitochondrial intermembrane side. The chain crosses the membrane as a helical span at residues 297-310 (SLAGATAQTAIYPM). At 311 to 346 (EVMKTRLTLRKTGQYSGMFDCAKKILRKEGVKAFYK) the chain is on the mitochondrial matrix side. The helical transmembrane segment at 347-366 (GYVPNILGIIPYAGIDLAVY) threads the bilayer. Over 367–389 (ETLKNTWLSHYAKDTANPGVLVL) the chain is Mitochondrial intermembrane. Residues 390 to 407 (LGCGTISSTCGQLASYPL) form a helical membrane-spanning segment. The Mitochondrial matrix portion of the chain corresponds to 408–446 (ALIRTRMQAMASMEGSEQVSMSKLVKKIMQKEGFFGLYR). A helical transmembrane segment spans residues 447-466 (GILPNFMKVIPAVSISYVVY). Residues 467–477 (EYMRSGLGISK) are Mitochondrial intermembrane-facing.

It belongs to the mitochondrial carrier (TC 2.A.29) family. Monomer.

Its subcellular location is the mitochondrion inner membrane. The catalysed reaction is Mg(2+)(out) + phosphate(in) + ATP(out) = Mg(2+)(in) + phosphate(out) + ATP(in). It carries out the reaction ADP(out) + phosphate(in) + H(+)(out) = ADP(in) + phosphate(out) + H(+)(in). It catalyses the reaction AMP(out) + phosphate(in) = AMP(in) + phosphate(out). The enzyme catalyses phosphate(in) + ATP(out) + 2 H(+)(out) = phosphate(out) + ATP(in) + 2 H(+)(in). The catalysed reaction is dADP(in) + ADP(out) = dADP(out) + ADP(in). It carries out the reaction Mg(2+)(in) + ADP(out) + ATP(in) + H(+)(out) = Mg(2+)(out) + ADP(in) + ATP(out) + H(+)(in). It catalyses the reaction ADP(out) + diphosphate(in) = ADP(in) + diphosphate(out). The enzyme catalyses dAMP(in) + ADP(out) + H(+)(out) = dAMP(out) + ADP(in) + H(+)(in). The catalysed reaction is 3'-AMP(in) + ADP(out) + H(+)(out) = 3'-AMP(out) + ADP(in) + H(+)(in). It carries out the reaction dAMP(out) + phosphate(in) = dAMP(in) + phosphate(out). It catalyses the reaction 3'-AMP(out) + phosphate(in) = 3'-AMP(in) + phosphate(out). The enzyme catalyses dADP(out) + phosphate(in) + H(+)(out) = dADP(in) + phosphate(out) + H(+)(in). With respect to regulation, activated by an increase in cytosolic calcium levels that induce a conformational change of the N-terminal regulatory domain, uncapping the channel and allowing transport. Inhibited by bathophenanthroline, mersalyl, p-hydroxymercuribenzoate, bromcresol purple and tannic acid. In terms of biological role, electroneutral antiporter that mediates the transport of adenyl nucleotides through the inner mitochondrial membrane. Originally identified as an ATP-magnesium/inorganic phosphate antiporter, it also acts as a broad specificity adenyl nucleotide antiporter. By regulating the mitochondrial matrix adenyl nucleotide pool could adapt to changing cellular energetic demands and indirectly regulate adenyl nucleotide-dependent metabolic pathways. The polypeptide is Mitochondrial adenyl nucleotide antiporter SLC25A24 (slc25a24) (Danio rerio (Zebrafish)).